The sequence spans 439 residues: IAA-amino acid hydrolase ILR1-like 2 (439 aa).

A signal peptide spans 1–21 (MALNKLLSLTFQLLLFLLSVS). Mn(2+) contacts are provided by cysteine 137, histidine 139, glutamate 173, histidine 197, and histidine 397. The Prevents secretion from ER motif lies at 436–439 (HEEL).

Belongs to the peptidase M20 family. Monomer. Requires Mn(2+) as cofactor. As to expression, expressed in leaves, stems, siliques, seeds and flowers. Detected in the distal tips of cotyledons and seedling leaves, hydathodes of leaves from mature plants, pollen, ovules and developing seeds.

The protein localises to the endoplasmic reticulum lumen. Functionally, hydrolyzes certain amino acid conjugates of the plant growth regulator indole-3-acetic acid (IAA), including IAA-Ala, IAA-Leu, IAA-Met, IAA-Phe, IAA-Ser, IAA-Thr, IAA-Tyr and IAA-Val. Is the most efficient enzyme of the ILL family for IAA-Ala. Not important for IAA-Leu hydrolysis in roots. May act with ILR1 to provide free IAA to germinating seedlings. This chain is IAA-amino acid hydrolase ILR1-like 2, found in Arabidopsis thaliana (Mouse-ear cress).